A 510-amino-acid chain; its full sequence is NAD(P)H-quinone oxidoreductase subunit 2 B, chloroplastic (510 aa).

A run of 12 helical transmembrane segments spans residues 24-44 (LLLF…GLIL), 59-79 (WFYF…LFRW), 99-119 (IFQF…VEYI), 124-144 (MAIT…MFLC), 149-169 (LITI…LSGY), 183-203 (YLLM…WLYG), 229-249 (ISIA…PAPF), 295-315 (WHLL…LLAI), 323-343 (MLAY…IVGD), 354-374 (YMLF…LFGL), 395-415 (ALSL…AGFF), and 418-438 (LYLF…IGLL).

The protein belongs to the complex I subunit 2 family. As to quaternary structure, NDH is composed of at least 16 different subunits, 5 of which are encoded in the nucleus.

It localises to the plastid. It is found in the chloroplast thylakoid membrane. It catalyses the reaction a plastoquinone + NADH + (n+1) H(+)(in) = a plastoquinol + NAD(+) + n H(+)(out). The enzyme catalyses a plastoquinone + NADPH + (n+1) H(+)(in) = a plastoquinol + NADP(+) + n H(+)(out). Functionally, NDH shuttles electrons from NAD(P)H:plastoquinone, via FMN and iron-sulfur (Fe-S) centers, to quinones in the photosynthetic chain and possibly in a chloroplast respiratory chain. The immediate electron acceptor for the enzyme in this species is believed to be plastoquinone. Couples the redox reaction to proton translocation, and thus conserves the redox energy in a proton gradient. The sequence is that of NAD(P)H-quinone oxidoreductase subunit 2 B, chloroplastic from Lolium perenne (Perennial ryegrass).